A 143-amino-acid chain; its full sequence is Large ribosomal subunit protein uL16 (143 aa).

This sequence belongs to the universal ribosomal protein uL16 family. Part of the 50S ribosomal subunit.

Its function is as follows. Binds 23S rRNA and is also seen to make contacts with the A and possibly P site tRNAs. This chain is Large ribosomal subunit protein uL16, found in Tropheryma whipplei (strain TW08/27) (Whipple's bacillus).